A 484-amino-acid chain; its full sequence is Perphorin-2 (484 aa).

N-linked (GlcNAc...) asparagine glycosylation is found at asparagine 16, asparagine 240, asparagine 256, asparagine 265, asparagine 326, asparagine 330, asparagine 356, and asparagine 411.

It localises to the secreted. It is found in the extracellular space. The protein localises to the extracellular matrix. Functionally, may be involved in conversion of asexual males and females to the sexual pathway. This chain is Perphorin-2, found in Volvox carteri (Green alga).